Here is a 288-residue protein sequence, read N- to C-terminus: Quinate/shikimate dehydrogenase (288 aa).

Substrate-binding residues include K71 and D107. NAD(+) contacts are provided by residues 132–135, 155–158, K205, 232–235, and G255; these read AGGA, NRKD, and CVYN.

It belongs to the shikimate dehydrogenase family. Homodimer.

It catalyses the reaction L-quinate + NAD(+) = 3-dehydroquinate + NADH + H(+). The enzyme catalyses L-quinate + NADP(+) = 3-dehydroquinate + NADPH + H(+). The catalysed reaction is shikimate + NADP(+) = 3-dehydroshikimate + NADPH + H(+). It carries out the reaction shikimate + NAD(+) = 3-dehydroshikimate + NADH + H(+). Its pathway is metabolic intermediate biosynthesis; chorismate biosynthesis; chorismate from D-erythrose 4-phosphate and phosphoenolpyruvate: step 4/7. In terms of biological role, the actual biological function of YdiB remains unclear, nor is it known whether 3-dehydroshikimate or quinate represents the natural substrate. Catalyzes the reversible NAD-dependent reduction of both 3-dehydroshikimate (DHSA) and 3-dehydroquinate to yield shikimate (SA) and quinate, respectively. It can use both NAD or NADP for catalysis, however it has higher catalytic efficiency with NAD. This chain is Quinate/shikimate dehydrogenase, found in Salmonella agona (strain SL483).